A 428-amino-acid polypeptide reads, in one-letter code: Threonine synthase (428 aa).

An N6-(pyridoxal phosphate)lysine modification is found at lysine 107.

It belongs to the threonine synthase family. Pyridoxal 5'-phosphate is required as a cofactor.

The enzyme catalyses O-phospho-L-homoserine + H2O = L-threonine + phosphate. Its pathway is amino-acid biosynthesis; L-threonine biosynthesis; L-threonine from L-aspartate: step 5/5. Is competitively inhibited by L-threo-3-hydroxyhomoserine phosphate. Functionally, catalyzes the gamma-elimination of phosphate from L-phosphohomoserine and the beta-addition of water to produce L-threonine. To a lesser extent, is able to slowly catalyze the deamination of L-threonine into alpha-ketobutyrate and that of L-serine and 3-chloroalanine into pyruvate. Is also able to rapidly convert vinylglycine to threonine, which proves that the pyridoxal p-quinonoid of vinylglycine is an intermediate in the TS reaction. The protein is Threonine synthase (thrC) of Escherichia coli (strain K12).